We begin with the raw amino-acid sequence, 207 residues long: LexA repressor (207 aa).

The segment at residues 28 to 47 (VREIARRFRITPRGAQLHLV) is a DNA-binding region (H-T-H motif). Active-site for autocatalytic cleavage activity residues include Ser-119 and Lys-156.

The protein belongs to the peptidase S24 family. In terms of assembly, homodimer.

It carries out the reaction Hydrolysis of Ala-|-Gly bond in repressor LexA.. Represses a number of genes involved in the response to DNA damage (SOS response), including recA and lexA. In the presence of single-stranded DNA, RecA interacts with LexA causing an autocatalytic cleavage which disrupts the DNA-binding part of LexA, leading to derepression of the SOS regulon and eventually DNA repair. The polypeptide is LexA repressor (Thermotoga neapolitana (strain ATCC 49049 / DSM 4359 / NBRC 107923 / NS-E)).